The following is a 368-amino-acid chain: DNA replication and repair protein RecF (368 aa).

G30–T37 provides a ligand contact to ATP.

This sequence belongs to the RecF family.

The protein localises to the cytoplasm. Functionally, the RecF protein is involved in DNA metabolism; it is required for DNA replication and normal SOS inducibility. RecF binds preferentially to single-stranded, linear DNA. It also seems to bind ATP. This chain is DNA replication and repair protein RecF, found in Streptococcus pyogenes serotype M49 (strain NZ131).